The sequence spans 281 residues: Putative dehydrogenase/reductase SDR family member 4-like 1 (281 aa).

36–60 (LVTASTDWIGFAVAQRLAQDGAHVV) lines the NADP(+) pocket. Serine 172 is a substrate binding site. Residue tyrosine 185 is the Proton acceptor of the active site. Lysine 189 serves as a coordination point for NADP(+). Residues 279-281 (SRL) carry the Peroxisomal targeting signal motif.

It belongs to the short-chain dehydrogenases/reductases (SDR) family.

Its function is as follows. Putative oxidoreductase. This is Putative dehydrogenase/reductase SDR family member 4-like 1 from Homo sapiens (Human).